We begin with the raw amino-acid sequence, 154 residues long: Myoglobin (154 aa).

The Globin domain occupies 2–148 (GLSDGEWQLV…FRNDMAAKYK (147 aa)). Ser-4 bears the Phosphoserine mark. His-65 lines the nitrite pocket. An O2-binding site is contributed by His-65. Thr-68 is modified (phosphothreonine). His-94 contributes to the heme b binding site.

The protein belongs to the globin family. As to quaternary structure, monomeric.

Its subcellular location is the cytoplasm. It is found in the sarcoplasm. The enzyme catalyses Fe(III)-heme b-[protein] + nitric oxide + H2O = Fe(II)-heme b-[protein] + nitrite + 2 H(+). The catalysed reaction is H2O2 + AH2 = A + 2 H2O. Functionally, monomeric heme protein which primary function is to store oxygen and facilitate its diffusion within muscle tissues. Reversibly binds oxygen through a pentacoordinated heme iron and enables its timely and efficient release as needed during periods of heightened demand. Depending on the oxidative conditions of tissues and cells, and in addition to its ability to bind oxygen, it also has a nitrite reductase activity whereby it regulates the production of bioactive nitric oxide. Under stress conditions, like hypoxia and anoxia, it also protects cells against reactive oxygen species thanks to its pseudoperoxidase activity. This chain is Myoglobin (MB), found in Sapajus apella (Brown-capped capuchin).